A 283-amino-acid polypeptide reads, in one-letter code: NAD kinase (283 aa).

D68 serves as the catalytic Proton acceptor. Residues 68 to 69 (DG), 142 to 143 (ND), R153, D172, 183 to 188 (TAYSLS), and Q242 contribute to the NAD(+) site.

The protein belongs to the NAD kinase family. A divalent metal cation serves as cofactor.

Its subcellular location is the cytoplasm. It carries out the reaction NAD(+) + ATP = ADP + NADP(+) + H(+). In terms of biological role, involved in the regulation of the intracellular balance of NAD and NADP, and is a key enzyme in the biosynthesis of NADP. Catalyzes specifically the phosphorylation on 2'-hydroxyl of the adenosine moiety of NAD to yield NADP. The sequence is that of NAD kinase from Caldanaerobacter subterraneus subsp. tengcongensis (strain DSM 15242 / JCM 11007 / NBRC 100824 / MB4) (Thermoanaerobacter tengcongensis).